The sequence spans 387 residues: Erythronate-4-phosphate dehydrogenase (387 aa).

Residues serine 45 and threonine 67 each contribute to the substrate site. Aspartate 147 lines the NAD(+) pocket. The active site involves arginine 208. Aspartate 232 serves as a coordination point for NAD(+). Glutamate 237 is an active-site residue. Residue histidine 254 is the Proton donor of the active site. Position 257 (glycine 257) interacts with NAD(+). Substrate is bound at residue tyrosine 258.

The protein belongs to the D-isomer specific 2-hydroxyacid dehydrogenase family. PdxB subfamily. As to quaternary structure, homodimer.

It is found in the cytoplasm. The enzyme catalyses 4-phospho-D-erythronate + NAD(+) = (R)-3-hydroxy-2-oxo-4-phosphooxybutanoate + NADH + H(+). It participates in cofactor biosynthesis; pyridoxine 5'-phosphate biosynthesis; pyridoxine 5'-phosphate from D-erythrose 4-phosphate: step 2/5. Catalyzes the oxidation of erythronate-4-phosphate to 3-hydroxy-2-oxo-4-phosphonooxybutanoate. In Shewanella violacea (strain JCM 10179 / CIP 106290 / LMG 19151 / DSS12), this protein is Erythronate-4-phosphate dehydrogenase.